We begin with the raw amino-acid sequence, 319 residues long: Cytochrome c biogenesis protein CcsA (319 aa).

7 helical membrane-spanning segments follow: residues 9–29 (ILTHISFSLVSIGITIFLITL), 44–64 (GVIGTFLCITGLLVTRWAYSG), 71–91 (LYESLLFLSWSFAIIHMFPYL), 143–163 (MVLGYAALLCGSLLSVALLVI), 225–245 (IISLGFIFLTIGILSGAVWAN), 259–273 (TWAFITWTMFAIYLH), and 286–306 (AIVAFLGFIIIWICYFGVNLL).

The protein belongs to the CcmF/CycK/Ccl1/NrfE/CcsA family. May interact with Ccs1.

The protein localises to the plastid. It is found in the chloroplast thylakoid membrane. Required during biogenesis of c-type cytochromes (cytochrome c6 and cytochrome f) at the step of heme attachment. This Oenothera parviflora (Small-flowered evening primrose) protein is Cytochrome c biogenesis protein CcsA.